A 59-amino-acid polypeptide reads, in one-letter code: Photosystem II reaction center protein K (59 aa).

Positions methionine 1–alanine 22 are excised as a propeptide. Residues methionine 38 to phenylalanine 58 traverse the membrane as a helical segment.

Belongs to the PsbK family. In terms of assembly, PSII is composed of 1 copy each of membrane proteins PsbA, PsbB, PsbC, PsbD, PsbE, PsbF, PsbH, PsbI, PsbJ, PsbK, PsbL, PsbM, PsbT, PsbX, PsbY, PsbZ, Psb30/Ycf12, at least 3 peripheral proteins of the oxygen-evolving complex and a large number of cofactors. It forms dimeric complexes.

The protein resides in the plastid. The protein localises to the chloroplast thylakoid membrane. Its function is as follows. One of the components of the core complex of photosystem II (PSII). PSII is a light-driven water:plastoquinone oxidoreductase that uses light energy to abstract electrons from H(2)O, generating O(2) and a proton gradient subsequently used for ATP formation. It consists of a core antenna complex that captures photons, and an electron transfer chain that converts photonic excitation into a charge separation. The sequence is that of Photosystem II reaction center protein K from Lactuca sativa (Garden lettuce).